Consider the following 156-residue polypeptide: Small ribosomal subunit protein uS7 (156 aa).

It belongs to the universal ribosomal protein uS7 family. In terms of assembly, part of the 30S ribosomal subunit. Contacts proteins S9 and S11.

One of the primary rRNA binding proteins, it binds directly to 16S rRNA where it nucleates assembly of the head domain of the 30S subunit. Is located at the subunit interface close to the decoding center, probably blocks exit of the E-site tRNA. The protein is Small ribosomal subunit protein uS7 of Pelotomaculum thermopropionicum (strain DSM 13744 / JCM 10971 / SI).